Reading from the N-terminus, the 426-residue chain is Lactate racemase (426 aa).

72–75 (DHTR) lines the Ni(II)-pyridinium-3,5-bisthiocarboxylate mononucleotide pocket. Catalysis depends on proton donor/acceptor residues H108 and H174. K184 and H200 together coordinate Ni(II)-pyridinium-3,5-bisthiocarboxylate mononucleotide. Residues Q295 and K298 each contribute to the substrate site.

The protein belongs to the lactate racemase family. As to quaternary structure, homodimer. It depends on Ni(II)-pyridinium-3,5-bisthiocarboxylate mononucleotide as a cofactor.

The enzyme catalyses (S)-lactate = (R)-lactate. With respect to regulation, activation of the apo-enzyme requires the three accessory proteins LarB, LarE and LarC, that are involved in the biosynthesis of the nickel-pincer cofactor of LarA. Functionally, catalyzes the interconversion between the D- and L-isomers of lactate. This is Lactate racemase from Thermoanaerobacterium thermosaccharolyticum (strain ATCC 7956 / DSM 571 / NCIMB 9385 / NCA 3814 / NCTC 13789 / WDCM 00135 / 2032) (Clostridium thermosaccharolyticum).